Consider the following 354-residue polypeptide: S-adenosylmethionine:tRNA ribosyltransferase-isomerase (354 aa).

The protein belongs to the QueA family. As to quaternary structure, monomer.

The protein localises to the cytoplasm. The enzyme catalyses 7-aminomethyl-7-carbaguanosine(34) in tRNA + S-adenosyl-L-methionine = epoxyqueuosine(34) in tRNA + adenine + L-methionine + 2 H(+). Its pathway is tRNA modification; tRNA-queuosine biosynthesis. In terms of biological role, transfers and isomerizes the ribose moiety from AdoMet to the 7-aminomethyl group of 7-deazaguanine (preQ1-tRNA) to give epoxyqueuosine (oQ-tRNA). This is S-adenosylmethionine:tRNA ribosyltransferase-isomerase from Pseudomonas savastanoi pv. phaseolicola (strain 1448A / Race 6) (Pseudomonas syringae pv. phaseolicola (strain 1448A / Race 6)).